We begin with the raw amino-acid sequence, 397 residues long: Protein Brevis radix-like 1 (397 aa).

2 disordered regions span residues 14 to 37 (GAPP…AGEC) and 105 to 148 (RAGS…EDDE). Over residues 124–148 (AGDEEEEEEEEEEEGTTADGSEDDE) the composition is skewed to acidic residues. The BRX 1 domain maps to 150–205 (KEWVAQVEPGVLITFLSLPEGGNDLKRIRFSREIFNKWQAQRWWAENYEKVMELYN). Disordered stretches follow at residues 212–278 (QTPL…QQHH) and 300–342 (SISG…DQER). Positions 220-230 (KSEDESLKEDI) are enriched in basic and acidic residues. Positions 309-320 (SSMDASMRSSSS) are enriched in low complexity. In terms of domain architecture, BRX 2 spans 342-397 (REWVEEDEPGVYITIRALPGGIRELRRVRFSREKFSEMHARLWWEENRARIHDQYL).

This sequence belongs to the BRX family.

The protein resides in the nucleus. The chain is Protein Brevis radix-like 1 (BRXL1) from Oryza sativa subsp. japonica (Rice).